A 323-amino-acid polypeptide reads, in one-letter code: Ribose-phosphate pyrophosphokinase 2 (323 aa).

Residues 43–45 and 102–103 contribute to the ATP site; these read DGE and RQ. Mg(2+) contacts are provided by histidine 136 and aspartate 177. The active site involves lysine 200. D-ribose 5-phosphate is bound by residues arginine 202, aspartate 226, and 230–234; that span reads DTAGT.

Belongs to the ribose-phosphate pyrophosphokinase family. Class I subfamily. Homohexamer. Requires Mg(2+) as cofactor.

The protein resides in the cytoplasm. The catalysed reaction is D-ribose 5-phosphate + ATP = 5-phospho-alpha-D-ribose 1-diphosphate + AMP + H(+). Its pathway is metabolic intermediate biosynthesis; 5-phospho-alpha-D-ribose 1-diphosphate biosynthesis; 5-phospho-alpha-D-ribose 1-diphosphate from D-ribose 5-phosphate (route I): step 1/1. Its function is as follows. Involved in the biosynthesis of the central metabolite phospho-alpha-D-ribosyl-1-pyrophosphate (PRPP) via the transfer of pyrophosphoryl group from ATP to 1-hydroxyl of ribose-5-phosphate (Rib-5-P). The polypeptide is Ribose-phosphate pyrophosphokinase 2 (Enterococcus faecalis (strain ATCC 700802 / V583)).